Reading from the N-terminus, the 186-residue chain is dCTP deaminase (186 aa).

Lys107–Arg112 contacts dCTP. Glu133 (proton donor/acceptor) is an active-site residue. DCTP is bound by residues Gln152, Tyr166, and Gln176.

It belongs to the dCTP deaminase family. Homotrimer.

It catalyses the reaction dCTP + H2O + H(+) = dUTP + NH4(+). It participates in pyrimidine metabolism; dUMP biosynthesis; dUMP from dCTP (dUTP route): step 1/2. Functionally, catalyzes the deamination of dCTP to dUTP. In Chloroflexus aggregans (strain MD-66 / DSM 9485), this protein is dCTP deaminase.